The primary structure comprises 948 residues: Putative JmjC domain-containing histone demethylation protein 1 (948 aa).

The JmjC domain occupies 243-402 (VSTTKLAYYV…PQLSIYNLEL (160 aa)). A substrate-binding site is contributed by Thr294. The Fe cation site is built by His297 and Glu299. Residue Lys314 participates in substrate binding.

Belongs to the JHDM1 histone demethylase family. It depends on Fe(2+) as a cofactor.

It is found in the nucleus. The enzyme catalyses N(6),N(6)-dimethyl-L-lysyl(36)-[histone H3] + 2 2-oxoglutarate + 2 O2 = L-lysyl(36)-[histone H3] + 2 formaldehyde + 2 succinate + 2 CO2. Functionally, may be a histone demethylase that specifically demethylates 'Lys-36' of histone H3, thereby playing a central role in histone code. Represses transcriptional silencing by negatively affecting heterochromatin stability. This is Putative JmjC domain-containing histone demethylation protein 1 (jhd1) from Schizosaccharomyces pombe (strain 972 / ATCC 24843) (Fission yeast).